The sequence spans 569 residues: Small ribosomal subunit protein bS1 (569 aa).

6 S1 motif domains span residues 52–116 (GAIL…LSRE), 134–199 (GSIV…VSRR), 220–288 (GERR…LGLK), 305–375 (GKRV…LGLK), 392–462 (GLRV…LGVK), and 479–548 (GSDI…LSIK).

Belongs to the bacterial ribosomal protein bS1 family.

In terms of biological role, binds mRNA; thus facilitating recognition of the initiation point. It is needed to translate mRNA with a short Shine-Dalgarno (SD) purine-rich sequence. The protein is Small ribosomal subunit protein bS1 (rpsA) of Chlamydia trachomatis serovar D (strain ATCC VR-885 / DSM 19411 / UW-3/Cx).